Reading from the N-terminus, the 1798-residue chain is MASSLAAQLSQIAAKSTNQLDLKAQRIAHSQSLIFDRKVASIQDFDTVYQICYEGFQELCQLDSRFTAFERTIFSEQSKAEDRTQLTAAQNKELDVALEAFLALVGGRLLLNPAIKAVEWLVRRFRIHEYNTSFTILTFLPYYTTPLFLNLLAILPEDLTPTFKVLIPYKKSSINPPRHPLVHSATTNKPFLAALNSYVLQVSRQQAHHHALLAFWAGVYTEAVAGMLDASRSGRREIEKQKHEDIVISVLPILNDGFAMKNVSELIIGCYMVSVVLAQKASLQDKVLDSLMEAVAGSWTEETVESGLVCLAVLAQQKPETKLPRRALKAILRLDDIFKRLTELATQYKTSHLLLGVVAGCLDDLPRQKDTARLDLLSQIFQNQLLGEPEMSKAMALVLEATSSVHKDGAMSLDAQARLADLVQVFSQSESLRPTFQKTIAESSFDIAALEHNLQTVIDTAPAPRTVEDVEMEDVEKEEEQDHFSSTVESLSGEKLFKGSFLSTQSIPLFEKLAQAFTLAIGSKEKCQTFSDLAALGKNEAEKSPQYLSFFIRVFSGPYSMGTRVTALNMITSFLTSTESTNLDFQALLPFLLVTLTDPSERVRREAAAALAAVGSLYKKNRKGEDIWARDNLYGQPKDIKWLPTRDAQKVFERAVLPSLEECIFDATHIGKVLENTLRGVSVDANASELKKPLRLAFFTFLCSHAIELPLFTPKLGLLNILNRIDKAGGTTRTKELEPLLKTWRGFSEREVQDICEKERVPVSDVERQMVAIVTPKEKDSIMILLSNVSSHSESLRPSFIAAVFGRIKDIWARVAEDRQTVAAEQLFDISLGLSDLPLVNNSRDLLRSVQLPGSVLAQFLERIPVSLTDMEALGPAPKRRRTSQNNMIAMTVKDEAEFGKVMEKMTFILELVDSSSPETHPELADGLFQTLAALHHFKSQIQSGMSYLLSLTLGSLLAIVNRSKESAKAQFDTSVIRADLVVDCVRTTESPQVQNAALLLVAGLSVIAPELVLHSVMPIFTFMGSSVLRKDDDYSVSVIDQTIDQVVPALIQSLRDQKRDVVSGTSELLLSFTAAFEHIPSHRRLRLFHALITKLGTQDFLFAVLAMLANRYAMDKDVLVLMTGLVSDASAPVELTTYSKFLGLVSDSLKPKPGISQVLLGIGSDDGREPQKVAVDLLRDLAYLFKHSSLKVKMAKTFASEDEEAIRQLRSTFSQILEQVLTIGDSVQSMKLVSQANGDVLAALFGTLTLVDFLDTIEVLLERPNDELRRKVLRLLEGRLRQNPERDSASQIRVLDFLPTLVDIIRNSTDILLKHAAVACIDRIAEKYGKKDPSRVIGAAQVVASEACIGQTDDRIRIMGVLCLASMAETLGQVMIPALPEALSRSLALLELSLEEGKENSRLHDAVFSLFSALFVHIPYMISGPHLDKILLLSFKSANAEECEDDSRQEALKMMARKVDMAATLGAVDRNWQYAVQAGPVATKETLEVVSLAVEKHPKSATGKNIGVLSSILFKAFDLRREQLALGANATFDAADVDETEDALNDVTIKMIYKLNDTTFRPIFTKMLDWATSGLPKKDTQGSLARLTAFYKFLQVFFGTLQSIVTGYASYIIESVVSVLGKASPADKSTKALWLATMRLLRNAFEHDQDEFWQSPSHLNQISTPLINQLAHATNSSTAATVIAEAVPAITELAVAADSTDNHKELNTALMKFLRPSAGPNGKPAGGENPHTRLAALKAEQSLTEQLGEEWLALLPEMLPYISELMEDEDENVEREVRKWVKQIENVLGEKLDDMLT.

An HEAT 1 repeat occupies 583–620 (LDFQALLPFLLVTLTDPSERVRREAAAALAAVGSLYKK). Transmembrane regions (helical) follow at residues 942–962 (IQSG…AIVN) and 998–1018 (ALLL…HSVM). HEAT repeat units follow at residues 1042 to 1079 (QTID…AFEH), 1249 to 1286 (LTLV…QNPE), 1293 to 1331 (IRVL…KYGK), and 1754 to 1791 (ALLP…VLGE).

This sequence belongs to the HEATR1/UTP10 family. Component of the ribosomal small subunit (SSU) processome.

The protein localises to the nucleus. Its subcellular location is the nucleolus. It is found in the membrane. In terms of biological role, involved in nucleolar processing of pre-18S ribosomal RNA. Involved in ribosome biosynthesis. The sequence is that of U3 small nucleolar RNA-associated protein 10 from Aspergillus fumigatus (strain ATCC MYA-4609 / CBS 101355 / FGSC A1100 / Af293) (Neosartorya fumigata).